The sequence spans 227 residues: Cytidylate kinase (227 aa).

12-20 (GPSGAGKGT) serves as a coordination point for ATP.

The protein belongs to the cytidylate kinase family. Type 1 subfamily.

It is found in the cytoplasm. The enzyme catalyses CMP + ATP = CDP + ADP. It carries out the reaction dCMP + ATP = dCDP + ADP. The protein is Cytidylate kinase of Shigella sonnei (strain Ss046).